Consider the following 1037-residue polypeptide: Tyrosine-protein kinase-like otk (1037 aa).

The signal sequence occupies residues 1-23 (MDMDVMMISMCILASTFMAPGWA). Ig-like C2-type domains follow at residues 24–109 (STSG…REAS), 110–199 (PPAK…RVMS), 251–365 (PEDL…APLN), 368–464 (PGLL…VSIN), and 469–559 (PKFS…VQLV). The Extracellular portion of the chain corresponds to 24–582 (STSGFLRVPQ…GGDGFLVTRA (559 aa)). 5 cysteine pairs are disulfide-bonded: Cys47-Cys96, Cys138-Cys188, Cys276-Cys354, Cys399-Cys448, and Cys491-Cys543. 6 N-linked (GlcNAc...) asparagine glycosylation sites follow: Asn336, Asn418, Asn430, Asn445, Asn513, and Asn525. Residues 583-603 (VLITMTVALAYIVLVVGLMLW) form a helical membrane-spanning segment. Topologically, residues 604-1037 (CRYRRQARKA…SKAMQSVAEK (434 aa)) are cytoplasmic. 2 disordered regions span residues 623-683 (AGGD…KSVY) and 720-777 (SAQS…KEEE). Positions 658–676 (KSNGDAQKSDDTACSQQSR) are enriched in polar residues. The residue at position 681 (Ser681) is a Phosphoserine. The Protein kinase; inactive domain occupies 693 to 1031 (LSELLQIGRG…QLGSALSKAM (339 aa)). The segment covering 723-734 (SDKDADTEKQHS) has biased composition (basic and acidic residues). A compositionally biased stretch (gly residues) spans 739 to 749 (GSGGSGSGSGS). Positions 768-777 (DDIEEIKEEE) are enriched in acidic residues.

This sequence belongs to the protein kinase superfamily. Tyr protein kinase family. Insulin receptor subfamily. As to quaternary structure, interacts with plexA; component of a receptor complex that mediates the repulsive signaling in response to Semaphorin ligands.

It is found in the cell membrane. Acts as a calcium-dependent, homophilic cell adhesion molecule that regulates neural recognition during the development of the nervous system. Component of the repulsive Plexin signaling response to regulate motor axon guidance at the embryonic stage. Also component of a receptor complex that is required in the adult visual system to innervate the lamina layer; specific targeting of R1-R6 axons. The sequence is that of Tyrosine-protein kinase-like otk from Drosophila pseudoobscura pseudoobscura (Fruit fly).